The primary structure comprises 88 residues: YcgL domain-containing protein CGSHiGG_01115 (88 aa).

A YcgL domain is found at 1 to 85 (MLCAIYKSKK…QDDGLFNSLS (85 aa)).

The chain is YcgL domain-containing protein CGSHiGG_01115 from Haemophilus influenzae (strain PittGG).